We begin with the raw amino-acid sequence, 379 residues long: Cathepsin B-like protease 1 (379 aa).

The N-terminal stretch at 1–30 is a signal peptide; sequence MADSCCIRLHLLASVFLLLFSSFNLQGIAA. The propeptide at 31–102 is activation peptide; sequence ENLSKQKLTS…PIVRHDLSLK (72 aa). N-linked (GlcNAc...) asparagine glycosylation is found at asparagine 32 and asparagine 69. 6 disulfides stabilise this stretch: cysteine 116/cysteine 165, cysteine 148/cysteine 191, cysteine 182/cysteine 236, cysteine 183/cysteine 187, cysteine 213/cysteine 240, and cysteine 222/cysteine 227. The active site involves cysteine 151. A glycan (N-linked (GlcNAc...) asparagine) is linked at asparagine 171. Active-site residues include histidine 306 and asparagine 327. Asparagine 330 carries an N-linked (GlcNAc...) asparagine glycan. The propeptide at 363–379 is removed in mature form; it reads NVFKGITTSDDLLVSSV.

Belongs to the peptidase C1 family.

Functionally, thiol protease that plays a central role in plant programmed cell death (PCD). In addition to its role in protein degradation, may cleave and/or degrade a number of target proteins, activating signaling towards PCD. Contributes to the increase of caspase-3-like activity after UV-C-induced PCD and is required for abiotic stress-induced PCD. Functions redundantly with CATHB2 and CATHB3 in basal defense and distinct forms of plant programmed cell death (PCD). Participates in the establishment of basal resistance against the bacterial pathogen Pseudomonase syringae pv. tomato DC3000. Required for full levels of PCD during resistance (R) gene-mediated hypersensitive response (HR). Involved in the regulation of senescence, a developmental form of PCD in plants. In Arabidopsis thaliana (Mouse-ear cress), this protein is Cathepsin B-like protease 1.